The chain runs to 1367 residues: METQLQSIFEEVVKTEIIEEAFPGMFMDTPEDEKTKLISCLAAFRQFWSGLSQESHEQCVQWIVKFIHGQHSPKRISFLYDCLAMAVETGLLPPRMVCESLINSDSLEWERTQLWALTFKLVRKIIGGVDYKGVRDLLKAILEKILTIPNTVSSAVVQQLLAAREVIAYILERNACLLPAYFAVTEIRKLYPEGKLPHWLLGNLVSDFVDTFRPTARINSICGRCSLLPVVNNSGAICNSWKLDPATLRFPLKGLLPYDKDLFEPQTALLRYVLEQPYSRDMVCNMLGLNKQHKQRCPVLEDQLVDLVVYAMERSETEEKFDDGGTSQLLWQHLSSQLIFFVLFQFASFPHMVLSLHQKLAGRGLIKGRDHLMWVLLQFISGSIQKNALADFLPVMKLFDLLYPEKECIPVPDINKPQSTHAFAMTCIWIHLNRKAQNGDSTLQIPIPHSLKLHHEFLQQSLRNKSLQMNDYKIALLCNAYSTNSECFTLPMGALVETIYGNGIMRVPLPGTSCLASASVTPLPMNLLDSLTVHAKMSLIHSIATRVIKLAHTKSSVALAPALVETYSRLLVYMEIESLGIKGFISQLLPTVFKSHAWGILHTLLEMFSHRMHHIQPHYRVQLLSHLHTLAAVAQTNQNQLHLCVESTALRLITALGSSEVQPQFTRFLNDPKTVLSAESEELNRALILTLARATHVTDFFTGSDSIQGTWCKDILQTIMNFTPHNWASHTLSCFPAPLQAFFKQNNVPQESRFNLKKNVEEEYRKWKSMTDENEIITQFSVQGFPPLFLCLLWKMLLETDHISQIGYKVLERIGARALVAHVRTFADFLVYEFSTSAGGQQLNKCIEILNDMVWKYNIVTLDRLILCLAMRSHEGNEAQVCYFIIQLLLLKPNDFRNRVSDFVKENSPEHWLQSDWHTKHMSYHKKYPEKLYFEGLAEQVDPPVPIQSPYLPIYFGNVCLRFLPVFDIVIHRFLELLPVSKSLETLLDHLGGLYKFHDRPVTYLYNTLHYYEMCLRNRDHLKRKLVHAIIGSLKDNRPQGWCLSDTYLKHAMNAREDNPWVPEDSYYCKLIGRLVDTMAGKSPGPFPNCDWRFNEFPNPAAHALHVTCVELMALAVPGKDVGNALLNVVLKSQPLVPRENITAWMNAIGLIITALPEPYWIVLHDRIVNVISSSSLTSETEWVGYPFRLFDFTACHQSYSEMSCSYTLALAHAVWHHSSIGQLSLIPKFLTEALLPVVKTEFQLLYVYHLVGPFLQRFQQERTRCMIEIGVAFYDMLLNVDQCSTHLNYMDPICDFLYHMKYMFTGDSVKEQVEKIICNLKPALKLRLRFITHISKMEPAVPPQALNSGSPAPQSNQVPASLPVTQ.

The interval 1343 to 1367 (PPQALNSGSPAPQSNQVPASLPVTQ) is disordered. Residues 1346–1367 (ALNSGSPAPQSNQVPASLPVTQ) are compositionally biased toward polar residues.

The protein belongs to the Mediator complex subunit 23 family. Component of the Mediator complex, which is composed of MED1, MED4, MED6, MED7, MED8, MED9, MED10, MED11, MED12, MED13, MED13L, MED14, MED15, MED16, MED17, MED18, MED19, MED20, MED21, MED22, MED23, MED24, MED25, MED26, MED27, MED29, MED30, MED31, CCNC, CDK8 and CDC2L6/CDK11. The MED12, MED13, CCNC and CDK8 subunits form a distinct module termed the CDK8 module. Mediator containing the CDK8 module is less active than Mediator lacking this module in supporting transcriptional activation. Individual preparations of the Mediator complex lacking one or more distinct subunits have been variously termed ARC, CRSP, DRIP, PC2, SMCC and TRAP. Interacts with CEBPB (when not methylated), CTNNB1, and GLI3. Interacts with CDK8 and ELK1.

It is found in the nucleus. In terms of biological role, component of the Mediator complex, a coactivator involved in the regulated transcription of nearly all RNA polymerase II-dependent genes. Mediator functions as a bridge to convey information from gene-specific regulatory proteins to the basal RNA polymerase II transcription machinery. Mediator is recruited to promoters by direct interactions with regulatory proteins and serves as a scaffold for the assembly of a functional pre-initiation complex with RNA polymerase II and the general transcription factors. Also required for transcriptional activation subsequent to the assembly of the pre-initiation complex. Required for transcriptional activation by adenovirus E1A protein. Required for ELK1-dependent transcriptional activation in response to activated Ras signaling. The chain is Mediator of RNA polymerase II transcription subunit 23 (Med23) from Mus musculus (Mouse).